Reading from the N-terminus, the 858-residue chain is Ubiquitin carboxyl-terminal hydrolase 13 (858 aa).

A Phosphoserine modification is found at serine 112. Residues 185–293 (PVSKYANNLV…KHLAHFGIDM (109 aa)) form a UBP-type; degenerate zinc finger. Residues cysteine 209, cysteine 212, cysteine 229, and histidine 242 each coordinate Zn(2+). Lysine 309 participates in a covalent cross-link: Glycyl lysine isopeptide (Lys-Gly) (interchain with G-Cter in SUMO2). Positions 334–856 (TGLKNLGNSC…LGYMYFYRRI (523 aa)) constitute a USP domain. The active-site Nucleophile is the cysteine 343. Lysine 403 participates in a covalent cross-link: Glycyl lysine isopeptide (Lys-Gly) (interchain with G-Cter in SUMO2). 2 consecutive UBA domains span residues 650–691 (DIDE…IIVH) and 722–762 (QPPE…IFSH). Catalysis depends on histidine 818, which acts as the Proton acceptor.

This sequence belongs to the peptidase C19 family. Interacts with UFD1. Interacts (via UBA domains) with SIAH2 (when ubiquitinated). Interacts with BAG6; the interaction is direct and may mediate UBL4A deubiquitination. Interacts (via UBA 2 domain) with AMFR; the interaction is direct. Interacts with UBL4A; may be indirect via BAG6. Interacts with NEDD4.

It is found in the cytoplasm. It carries out the reaction Thiol-dependent hydrolysis of ester, thioester, amide, peptide and isopeptide bonds formed by the C-terminal Gly of ubiquitin (a 76-residue protein attached to proteins as an intracellular targeting signal).. With respect to regulation, specifically inhibited by spautin-1 (specific and potent autophagy inhibitor-1), a derivative of MBCQ that binds to USP13 and inhibits deubiquitinase activity. Regulated by PIK3C3/VPS34-containing complexes. The weak deubiquitinase activity in vitro suggests the existence of some mechanism that activates the enzyme. Functionally, deubiquitinase that mediates deubiquitination of target proteins such as BECN1, MITF, SKP2 and USP10 and is involved in various processes such as autophagy, endoplasmic reticulum-associated degradation (ERAD), cell cycle progression or DNA damage response. Component of a regulatory loop that controls autophagy and p53/TP53 levels: mediates deubiquitination of BECN1, a key regulator of autophagy, leading to stabilize the PIK3C3/VPS34-containing complexes. Alternatively, forms with NEDD4 a deubiquitination complex, which subsequently stabilizes VPS34 to promote autophagy. Also deubiquitinates USP10, an essential regulator of p53/TP53 stability. In turn, PIK3C3/VPS34-containing complexes regulate USP13 stability, suggesting the existence of a regulatory system by which PIK3C3/VPS34-containing complexes regulate p53/TP53 protein levels via USP10 and USP13. Recruited by nuclear UFD1 and mediates deubiquitination of SKP2, thereby regulating endoplasmic reticulum-associated degradation (ERAD). Also regulates ERAD through the deubiquitination of UBL4A a component of the BAG6/BAT3 complex. Mediates stabilization of SIAH2 independently of deubiquitinase activity: binds ubiquitinated SIAH2 and acts by impairing SIAH2 autoubiquitination. Regulates the cell cycle progression by stabilizing cell cycle proteins such as SKP2 and AURKB. In addition, plays an important role in maintaining genomic stability and in DNA replication checkpoint activation via regulation of RAP80 and TOPBP1. Deubiquitinates the multifunctional protein HMGB1 and subsequently drives its nucleocytoplasmic localization and its secretion. Positively regulates type I and type II interferon signalings by deubiquitinating STAT1 but negatively regulates antiviral response by deubiquitinating STING1. This Mus musculus (Mouse) protein is Ubiquitin carboxyl-terminal hydrolase 13 (Usp13).